Reading from the N-terminus, the 288-residue chain is Shikimate dehydrogenase (NADP(+)) (288 aa).

Residues 21-23 and T68 each bind shikimate; that span reads SLS. Residue K72 is the Proton acceptor of the active site. E84 lines the NADP(+) pocket. The shikimate site is built by N93 and D108. Residues 132–136 and L230 contribute to the NADP(+) site; that span reads GNGGA. Y232 is a binding site for shikimate. G253 provides a ligand contact to NADP(+).

Belongs to the shikimate dehydrogenase family. As to quaternary structure, homodimer.

It carries out the reaction shikimate + NADP(+) = 3-dehydroshikimate + NADPH + H(+). It functions in the pathway metabolic intermediate biosynthesis; chorismate biosynthesis; chorismate from D-erythrose 4-phosphate and phosphoenolpyruvate: step 4/7. Its function is as follows. Involved in the biosynthesis of the chorismate, which leads to the biosynthesis of aromatic amino acids. Catalyzes the reversible NADPH linked reduction of 3-dehydroshikimate (DHSA) to yield shikimate (SA). The protein is Shikimate dehydrogenase (NADP(+)) of Gloeothece citriformis (strain PCC 7424) (Cyanothece sp. (strain PCC 7424)).